Here is a 155-residue protein sequence, read N- to C-terminus: SsrA-binding protein (155 aa).

Over residues 123–142 (DLHDKRETEKKRDWEREKGQ) the composition is skewed to basic and acidic residues. Positions 123-155 (DLHDKRETEKKRDWEREKGQLMRHKISSPRKDT) are disordered. Positions 143–155 (LMRHKISSPRKDT) are enriched in basic residues.

This sequence belongs to the SmpB family.

It is found in the cytoplasm. Required for rescue of stalled ribosomes mediated by trans-translation. Binds to transfer-messenger RNA (tmRNA), required for stable association of tmRNA with ribosomes. tmRNA and SmpB together mimic tRNA shape, replacing the anticodon stem-loop with SmpB. tmRNA is encoded by the ssrA gene; the 2 termini fold to resemble tRNA(Ala) and it encodes a 'tag peptide', a short internal open reading frame. During trans-translation Ala-aminoacylated tmRNA acts like a tRNA, entering the A-site of stalled ribosomes, displacing the stalled mRNA. The ribosome then switches to translate the ORF on the tmRNA; the nascent peptide is terminated with the 'tag peptide' encoded by the tmRNA and targeted for degradation. The ribosome is freed to recommence translation, which seems to be the essential function of trans-translation. This Methylibium petroleiphilum (strain ATCC BAA-1232 / LMG 22953 / PM1) protein is SsrA-binding protein.